The following is a 345-amino-acid chain: S-adenosylmethionine:tRNA ribosyltransferase-isomerase (345 aa).

Belongs to the QueA family. In terms of assembly, monomer.

The protein resides in the cytoplasm. It catalyses the reaction 7-aminomethyl-7-carbaguanosine(34) in tRNA + S-adenosyl-L-methionine = epoxyqueuosine(34) in tRNA + adenine + L-methionine + 2 H(+). It functions in the pathway tRNA modification; tRNA-queuosine biosynthesis. Its function is as follows. Transfers and isomerizes the ribose moiety from AdoMet to the 7-aminomethyl group of 7-deazaguanine (preQ1-tRNA) to give epoxyqueuosine (oQ-tRNA). The protein is S-adenosylmethionine:tRNA ribosyltransferase-isomerase of Helicobacter pylori (strain G27).